A 426-amino-acid polypeptide reads, in one-letter code: Serine--tRNA ligase (426 aa).

233 to 235 (TAE) is an L-serine binding site. 264 to 266 (RSE) lines the ATP pocket. An L-serine-binding site is contributed by Glu287. Position 351–354 (351–354 (EISS)) interacts with ATP. Ser387 provides a ligand contact to L-serine.

It belongs to the class-II aminoacyl-tRNA synthetase family. Type-1 seryl-tRNA synthetase subfamily. As to quaternary structure, homodimer. The tRNA molecule binds across the dimer.

Its subcellular location is the cytoplasm. The enzyme catalyses tRNA(Ser) + L-serine + ATP = L-seryl-tRNA(Ser) + AMP + diphosphate + H(+). It catalyses the reaction tRNA(Sec) + L-serine + ATP = L-seryl-tRNA(Sec) + AMP + diphosphate + H(+). The protein operates within aminoacyl-tRNA biosynthesis; selenocysteinyl-tRNA(Sec) biosynthesis; L-seryl-tRNA(Sec) from L-serine and tRNA(Sec): step 1/1. Its function is as follows. Catalyzes the attachment of serine to tRNA(Ser). Is also able to aminoacylate tRNA(Sec) with serine, to form the misacylated tRNA L-seryl-tRNA(Sec), which will be further converted into selenocysteinyl-tRNA(Sec). This is Serine--tRNA ligase from Stutzerimonas stutzeri (strain A1501) (Pseudomonas stutzeri).